The sequence spans 447 residues: Tubulin beta chain (447 aa).

Gln-11, Glu-69, Ser-138, Gly-142, Thr-143, Gly-144, Asn-204, and Asn-226 together coordinate GTP. Glu-69 provides a ligand contact to Mg(2+). Residues 424-447 are disordered; that stretch reads QYQEASVSEGEEEYDEEAPLEGEE. Positions 432–447 are enriched in acidic residues; the sequence is EGEEEYDEEAPLEGEE.

This sequence belongs to the tubulin family. As to quaternary structure, dimer of alpha and beta chains. A typical microtubule is a hollow water-filled tube with an outer diameter of 25 nm and an inner diameter of 15 nM. Alpha-beta heterodimers associate head-to-tail to form protofilaments running lengthwise along the microtubule wall with the beta-tubulin subunit facing the microtubule plus end conferring a structural polarity. Microtubules usually have 13 protofilaments but different protofilament numbers can be found in some organisms and specialized cells. Mg(2+) serves as cofactor.

It is found in the cytoplasm. The protein resides in the cytoskeleton. Tubulin is the major constituent of microtubules, a cylinder consisting of laterally associated linear protofilaments composed of alpha- and beta-tubulin heterodimers. Microtubules grow by the addition of GTP-tubulin dimers to the microtubule end, where a stabilizing cap forms. Below the cap, tubulin dimers are in GDP-bound state, owing to GTPase activity of alpha-tubulin. This chain is Tubulin beta chain (TUB1), found in Cercospora beticola (Sugarbeet leaf spot fungus).